Reading from the N-terminus, the 509-residue chain is Coiled-coil domain-containing protein 181 (509 aa).

Disordered regions lie at residues 27–122 (INDK…EDEE) and 287–368 (LAQV…NEKK). Composition is skewed to basic and acidic residues over residues 41-58 (ACKK…KETE) and 67-82 (DPDK…RRND). Positions 319–333 (RIQSAGVSPVTSTYC) are enriched in polar residues. Coiled-coil stretches lie at residues 335-377 (SPRQ…VFKA) and 418-488 (LKKK…RSKQ). Residues 337–368 (RQKELQKQLERKRERLKREEEQRKLEEENEKK) are compositionally biased toward basic and acidic residues.

This sequence belongs to the CCDC181 family. Homodimer. Interacts with HOOK1. Interacts with HOOK2. Interacts with HOOK3.

It localises to the cytoplasm. The protein localises to the cytoskeleton. It is found in the cell projection. Its subcellular location is the cilium. The protein resides in the flagellum. In terms of biological role, microtubule-binding protein that localizes to the microtubular manchette of elongating spermatids. The sequence is that of Coiled-coil domain-containing protein 181 from Rattus norvegicus (Rat).